A 474-amino-acid polypeptide reads, in one-letter code: tRNA-2-methylthio-N(6)-dimethylallyladenosine synthase (474 aa).

Residues Lys3–Gly120 enclose the MTTase N-terminal domain. The [4Fe-4S] cluster site is built by Cys12, Cys49, Cys83, Cys157, Cys161, and Cys164. A Radical SAM core domain is found at Arg143–Ala375. One can recognise a TRAM domain in the interval Arg378–Arg441.

It belongs to the methylthiotransferase family. MiaB subfamily. In terms of assembly, monomer. [4Fe-4S] cluster serves as cofactor.

Its subcellular location is the cytoplasm. The catalysed reaction is N(6)-dimethylallyladenosine(37) in tRNA + (sulfur carrier)-SH + AH2 + 2 S-adenosyl-L-methionine = 2-methylsulfanyl-N(6)-dimethylallyladenosine(37) in tRNA + (sulfur carrier)-H + 5'-deoxyadenosine + L-methionine + A + S-adenosyl-L-homocysteine + 2 H(+). Functionally, catalyzes the methylthiolation of N6-(dimethylallyl)adenosine (i(6)A), leading to the formation of 2-methylthio-N6-(dimethylallyl)adenosine (ms(2)i(6)A) at position 37 in tRNAs that read codons beginning with uridine. This chain is tRNA-2-methylthio-N(6)-dimethylallyladenosine synthase, found in Shigella boydii serotype 18 (strain CDC 3083-94 / BS512).